Reading from the N-terminus, the 551-residue chain is L-lactate permease (551 aa).

12 helical membrane-spanning segments follow: residues 13–33 (NIWL…FALI), 37–57 (LKGY…ALLF), 70–90 (VYGF…AVFV), 131–151 (GAAG…GLGF), 159–179 (LCLI…PILV), 194–214 (MVGR…MAIM), 244–264 (FIGP…CLTL), 366–386 (FDWF…SIVW), 405–425 (LALP…SNYS), 438–458 (TGHA…FLTG), 494–514 (VTGK…VGLV), and 530–550 (IFTC…TWMI).

It belongs to the lactate permease family.

It is found in the cell inner membrane. The catalysed reaction is (S)-lactate(in) + H(+)(in) = (S)-lactate(out) + H(+)(out). The enzyme catalyses (R)-lactate(in) + H(+)(in) = (R)-lactate(out) + H(+)(out). It catalyses the reaction glycolate(in) + H(+)(in) = glycolate(out) + H(+)(out). Its function is as follows. Uptake of L-lactate across the membrane. Can also transport D-lactate and glycolate. Seems to be driven by a proton motive force. The protein is L-lactate permease (lldP) of Escherichia coli O6:H1 (strain CFT073 / ATCC 700928 / UPEC).